The sequence spans 972 residues: Isoleucine--tRNA ligase (972 aa).

The 'HIGH' region motif lies at 63-73 (PYANGNIHIGH). Glutamate 603 contacts L-isoleucyl-5'-AMP. Positions 644 to 648 (KMSKS) match the 'KMSKS' region motif. An ATP-binding site is contributed by lysine 647.

It belongs to the class-I aminoacyl-tRNA synthetase family. IleS type 1 subfamily. In terms of assembly, monomer.

It localises to the cytoplasm. The enzyme catalyses tRNA(Ile) + L-isoleucine + ATP = L-isoleucyl-tRNA(Ile) + AMP + diphosphate. Its function is as follows. Catalyzes the attachment of isoleucine to tRNA(Ile). As IleRS can inadvertently accommodate and process structurally similar amino acids such as valine, to avoid such errors it has two additional distinct tRNA(Ile)-dependent editing activities. One activity is designated as 'pretransfer' editing and involves the hydrolysis of activated Val-AMP. The other activity is designated 'posttransfer' editing and involves deacylation of mischarged Val-tRNA(Ile). The sequence is that of Isoleucine--tRNA ligase from Brucella abortus (strain 2308).